A 364-amino-acid chain; its full sequence is Aminomethyltransferase (364 aa).

This sequence belongs to the GcvT family. The glycine cleavage system is composed of four proteins: P, T, L and H.

It catalyses the reaction N(6)-[(R)-S(8)-aminomethyldihydrolipoyl]-L-lysyl-[protein] + (6S)-5,6,7,8-tetrahydrofolate = N(6)-[(R)-dihydrolipoyl]-L-lysyl-[protein] + (6R)-5,10-methylene-5,6,7,8-tetrahydrofolate + NH4(+). The glycine cleavage system catalyzes the degradation of glycine. The polypeptide is Aminomethyltransferase (Escherichia coli (strain 55989 / EAEC)).